The sequence spans 456 residues: Glutamate-gated chloride channel (456 aa).

The first 22 residues, 1 to 22 (MGSGHYFWAILYFASLCSASLA), serve as a signal peptide directing secretion. The Extracellular portion of the chain corresponds to 23 to 245 (NNAKINFREK…VDLLFKREFS (223 aa)). Residues arginine 71, arginine 90, and serine 154 each coordinate L-glutamate. A disulfide bond links cysteine 163 and cysteine 177. Serine 183 is an L-glutamate binding site. Residues cysteine 222 and cysteine 233 are joined by a disulfide bond. Residues 246–268 (YYLIQIYIPCCMLVIVSWVSFWL) traverse the membrane as a helical segment. At 269 to 273 (DQGAV) the chain is on the cytoplasmic side. Residues 274 to 295 (PARVSLGVTTLLTMATQTSGIN) traverse the membrane as a helical segment. At 296-302 (ASLPPVS) the chain is on the extracellular side. A helical transmembrane segment spans residues 303–323 (YTKAIDVWTGVCLTFVFGALL). The Cytoplasmic segment spans residues 324–426 (EFALVNYASR…RQCSRSKRID (103 aa)). Residues 427 to 450 (VISRITFPLVFALFNLVYWSTYLF) form a helical membrane-spanning segment. Topologically, residues 451–456 (REEEDE) are extracellular.

It belongs to the ligand-gated ion channel (TC 1.A.9) family. Glutamate-gated chloride channel (TC 1.A.9.4) subfamily. Pentamer. Homomultimer. In terms of tissue distribution, expressed in the medulla layers (at protein level). Expressed in all major ON pathway medulla neurons (Mi1, Tm3, Mi4, and Mi9) and in OFF pathway neurons (Tm1, Tm2, Tm4, and Tm9).

It localises to the postsynaptic cell membrane. Its subcellular location is the cell membrane. Its activity is regulated as follows. Glutamate binding triggers a rapidly reversible current, while the anti-helmintic drug ivermectin triggers a permanently open channel configuration. Inhibited by picrotoxin. Glutamate-gated chloride channel subunit. Together with Gamma-aminobutyric acid receptor Rdl, plays an important role in the visual response by regulating the activity of ON/OFF-selective neurons. This chain is Glutamate-gated chloride channel (GluClalpha), found in Drosophila melanogaster (Fruit fly).